The chain runs to 165 residues: Large ribosomal subunit protein uL10 (165 aa).

It belongs to the universal ribosomal protein uL10 family. In terms of assembly, part of the ribosomal stalk of the 50S ribosomal subunit. The N-terminus interacts with L11 and the large rRNA to form the base of the stalk. The C-terminus forms an elongated spine to which L12 dimers bind in a sequential fashion forming a multimeric L10(L12)X complex.

Forms part of the ribosomal stalk, playing a central role in the interaction of the ribosome with GTP-bound translation factors. The polypeptide is Large ribosomal subunit protein uL10 (Burkholderia multivorans (strain ATCC 17616 / 249)).